The sequence spans 95 residues: Heteroscorpine-1 (95 aa).

Positions 1-19 (MNSKLTALIFLGLVAIASC) are cleaved as a signal peptide. Residues 55 to 95 (EFQCVANIDTMGNCETHCQKTSGEKGFCHGTKCKCGKPLSY) enclose the BetaSPN-type CS-alpha/beta domain. Disulfide bonds link C58-C82, C68-C87, and C72-C89.

Belongs to the long chain scorpion toxin family. Class 3 subfamily. In terms of processing, contains 3 disulfide bonds. As to expression, expressed by the venom gland.

Its subcellular location is the secreted. Its function is as follows. Has antibacterial activity against B.subtilis, K.pneumoniae and P.aeruginosa. In Heterometrus laoticus (Thai giant scorpion), this protein is Heteroscorpine-1.